The chain runs to 583 residues: CD166 antigen (583 aa).

The first 27 residues, 1-27, serve as a signal peptide directing secretion; sequence MESKGASSCRLLFCLLISATVFRPGLG. Ig-like V-type domains follow at residues 28-120 and 125-234; these read WYTV…TEDN and PTIV…KTIH. Topologically, residues 28–527 are extracellular; it reads WYTVNSAYGD…NREKVNDQAK (500 aa). 2 cysteine pairs are disulfide-bonded: Cys43–Cys113 and Cys157–Cys220. N-linked (GlcNAc...) asparagine glycans are attached at residues Asn91, Asn95, Asn167, Asn265, Asn306, Asn361, Asn457, Asn480, and Asn499. 3 consecutive Ig-like C2-type domains span residues 245–328, 333–409, and 416–501; these read PTEQ…TAIT, DLSL…ESLT, and PQIK…LNVS. Disulfide bonds link Cys270/Cys313, Cys354/Cys392, and Cys435/Cys485. Residues 528-549 form a helical membrane-spanning segment; that stretch reads LIVGIVVGLLLAALVAGVVYWL. Residues 550 to 583 lie on the Cytoplasmic side of the membrane; that stretch reads YMKKSKTASKHVNKDLGNMEENKKLEENNHKTEA. The tract at residues 562–583 is disordered; the sequence is NKDLGNMEENKKLEENNHKTEA. Over residues 569-583 the composition is skewed to basic and acidic residues; that stretch reads EENKKLEENNHKTEA.

Homodimer. Interacts (via extracellular domain) with CD6 (via extracellular domain). Homodimerization and interaction with CD6 involve the same region and cannot occur simultaneously. The affinity for CD6 is much higher than the affinity for self-association. Interacts (via glycosylated extracellular domain) with LGALS1 and LGALS3. Interaction with LGALS1 or LGALS3 inhibits interaction with CD6. Glycosylated. In terms of tissue distribution, detected on hematopoietic stem cells derived from umbilical cord blood. Detected on lymph vessel endothelial cells, skin and tonsil. Detected on peripheral blood monocytes. Detected on monocyte-derived dendritic cells (at protein level). Detected at low levels in spleen, placenta, liver. Expressed by activated T-cells, B-cells, monocytes and thymic epithelial cells. Isoform 1 and isoform 3 are detected in vein and artery endothelial cells, astrocytes, keratinocytes and artery smooth muscle cells. Expressed by neurons in the brain. Restricted expression in tumor cell lines. Detected in highly metastasizing melanoma cell lines.

The protein localises to the cell membrane. The protein resides in the cell projection. It localises to the axon. It is found in the dendrite. Its subcellular location is the secreted. Its function is as follows. Cell adhesion molecule that mediates both heterotypic cell-cell contacts via its interaction with CD6, as well as homotypic cell-cell contacts. Promotes T-cell activation and proliferation via its interactions with CD6. Contributes to the formation and maturation of the immunological synapse via its interactions with CD6. Mediates homotypic interactions with cells that express ALCAM. Acts as a ligand for the LILRB4 receptor, enhancing LILRB4-mediated inhibition of T cell proliferation. Required for normal hematopoietic stem cell engraftment in the bone marrow. Mediates attachment of dendritic cells onto endothelial cells via homotypic interaction. Inhibits endothelial cell migration and promotes endothelial tube formation via homotypic interactions. Required for normal organization of the lymph vessel network. Required for normal hematopoietic stem cell engraftment in the bone marrow. Plays a role in hematopoiesis; required for normal numbers of hematopoietic stem cells in bone marrow. Promotes in vitro osteoblast proliferation and differentiation. Promotes neurite extension, axon growth and axon guidance; axons grow preferentially on surfaces that contain ALCAM. Mediates outgrowth and pathfinding for retinal ganglion cell axons. In terms of biological role, inhibits activities of membrane-bound isoforms by competing for the same interaction partners. Inhibits cell attachment via homotypic interactions. Promotes endothelial cell migration. Inhibits endothelial cell tube formation. The sequence is that of CD166 antigen (ALCAM) from Homo sapiens (Human).